Here is a 161-residue protein sequence, read N- to C-terminus: Allophycocyanin subunit alpha-B (161 aa).

Asparagine 71 bears the N4-methylasparagine mark. (2R,3E)-phycocyanobilin is bound at residue cysteine 81.

This sequence belongs to the phycobiliprotein family. In terms of assembly, heterohexamer of two alpha chains, one alpha-B chain and three beta chains. In terms of processing, contains one covalently linked bilin chromophore.

The protein resides in the cellular thylakoid membrane. In terms of biological role, light-harvesting photosynthetic bile pigment-protein from the phycobiliprotein complex. Allophycocyanin has a maximum absorption at approximately 654 nanometers. The protein is Allophycocyanin subunit alpha-B (apcD) of Synechocystis sp. (strain ATCC 27184 / PCC 6803 / Kazusa).